A 623-amino-acid chain; its full sequence is Protein Atg16l2 (623 aa).

Basic and acidic residues predominate over residues 64–79 (PKDAISTRHEDWREEV). Residues 64-93 (PKDAISTRHEDWREEVSGTGPDQVSSPASL) form a disordered region. Residues 116-229 (VKKSAALDTL…ANQALVSQEL (114 aa)) adopt a coiled-coil conformation. WD repeat units follow at residues 338–377 (AHLSEVNAVCFGPNSSLLATGGADRLIHLWNVVGGRLEAN), 382–421 (GAGGSITSVDFDPSGSQVLAATYNQAAQLWKVGETQSKET), 424–458 (GHKDKVTAAKFKLTRHQAVTGSRDRTVKEWDLGRA), 459–502 (YCSR…CIQV), 504–543 (PVQGRVTSLHLSYDQLHLLSCSRDNTLKVIDLRISNIRQV), 550–589 (KCSSDWTKAVFSPDRSYALAGSSNGDLYIWDVNTGKLETS), and 593–623 (PHCTAVNAVAWCFSGNHVVSVDQGRKVVLWH).

It belongs to the WD repeat ATG16 family. In terms of assembly, homooligomer. Heterooligomer with ATG16L2. Interacts with ATG5. Self-oligomerizes to form a 800-kDa complex composed of ATG12-ATG5 and ATG16L2. Interacts with RAB33B. Widely expressed.

It localises to the cytoplasm. It is found in the cytosol. In terms of biological role, may play a role in regulating epithelial homeostasis in an ATG16L1-dependent manner. The polypeptide is Protein Atg16l2 (Atg16l2) (Mus musculus (Mouse)).